A 224-amino-acid polypeptide reads, in one-letter code: Urease accessory protein UreF 2 (224 aa).

Belongs to the UreF family. As to quaternary structure, ureD, UreF and UreG form a complex that acts as a GTP-hydrolysis-dependent molecular chaperone, activating the urease apoprotein by helping to assemble the nickel containing metallocenter of UreC. The UreE protein probably delivers the nickel.

The protein resides in the cytoplasm. Its function is as follows. Required for maturation of urease via the functional incorporation of the urease nickel metallocenter. The protein is Urease accessory protein UreF 2 of Pseudomonas syringae pv. tomato (strain ATCC BAA-871 / DC3000).